Consider the following 84-residue polypeptide: Putative regulatory protein Dde_2720 (84 aa).

This sequence belongs to the RemA family.

The protein is Putative regulatory protein Dde_2720 of Oleidesulfovibrio alaskensis (strain ATCC BAA-1058 / DSM 17464 / G20) (Desulfovibrio alaskensis).